Reading from the N-terminus, the 411-residue chain is Acetate kinase (411 aa).

Asparagine 7 contacts Mg(2+). Lysine 14 lines the ATP pocket. Substrate is bound at residue arginine 94. Catalysis depends on aspartate 151, which acts as the Proton donor/acceptor. ATP contacts are provided by residues 211 to 215 (HLGNG), 285 to 287 (DMR), and 333 to 337 (GIGEN). Mg(2+) is bound at residue glutamate 387.

It belongs to the acetokinase family. In terms of assembly, homodimer. Mg(2+) serves as cofactor. Requires Mn(2+) as cofactor.

It is found in the cytoplasm. It catalyses the reaction acetate + ATP = acetyl phosphate + ADP. Its pathway is metabolic intermediate biosynthesis; acetyl-CoA biosynthesis; acetyl-CoA from acetate: step 1/2. Catalyzes the formation of acetyl phosphate from acetate and ATP. Can also catalyze the reverse reaction. This Syntrophobacter fumaroxidans (strain DSM 10017 / MPOB) protein is Acetate kinase.